A 689-amino-acid polypeptide reads, in one-letter code: MPRDYSLDKVRNIGIMAHIDAGKTTTTERILFYTGKVHKLGEVHEGTATMDWMVQEQERGITITSAATTCYWKGHKINIIDTPGHVDFTVEVERSLRILDGAVAVFSAKEGVEPQSETVWRQADKYHVPRIAYVNKMDIIGADFFNVIKMIKERLGANPVAIQIPIGKEDTFRGIVDLIKMEAIIYEDDLGTVMDETEIPDDLKDLAEEYREKLLEAVSEQDETILEKYLEGEEITEEEIHKALRKGTINGELVPVVCGSSYKNKGIQPMLDAIVRYLPSPLDLPPVKGMALATGEEIERKADDSEPFSALAFKIMADPYVGKLAFFRVYSGTLNAGSYVLNSTKGKKERISRILQMHANHRQEMEAVYTGDIAAAVGLKDTTTGDTLCDENHPILLESMDFPEPVISVAIEPKTKAAQEKMTTALLKLAEEDPTFKTYTDQETGQTIIAGMGELHLEIIVDRLRREFNVDCNVGKPQVAYKETITKPVKIEGKFIRQSGGRGQYGHVWLEMEPAPRGEGYTFENRIVGGVIPKEYIPAVDAGVQEAMQNGVLGGYPVIDVKVALVDGSYHEVDSSDMAFKIAGSIAFKEGMKKANPVLLEPIMKVEVVVPEEYMGDIIGDINARRGRVEGMEARAGAQVIRAFVPLAEMFGYATDLRSKTQGRGTYTMQFHHYEEVPKNIADQILEKK.

Residues 8 to 282 (DKVRNIGIMA…AIVRYLPSPL (275 aa)) form the tr-type G domain. GTP-binding positions include 17–24 (AHIDAGKT), 81–85 (DTPGH), and 135–138 (NKMD).

It belongs to the TRAFAC class translation factor GTPase superfamily. Classic translation factor GTPase family. EF-G/EF-2 subfamily.

The protein resides in the cytoplasm. In terms of biological role, catalyzes the GTP-dependent ribosomal translocation step during translation elongation. During this step, the ribosome changes from the pre-translocational (PRE) to the post-translocational (POST) state as the newly formed A-site-bound peptidyl-tRNA and P-site-bound deacylated tRNA move to the P and E sites, respectively. Catalyzes the coordinated movement of the two tRNA molecules, the mRNA and conformational changes in the ribosome. This Thermoanaerobacter pseudethanolicus (strain ATCC 33223 / 39E) (Clostridium thermohydrosulfuricum) protein is Elongation factor G.